The following is a 550-amino-acid chain: Forkhead box protein N4 (550 aa).

A DNA-binding region (fork-head) is located at residues Lys231–Asp327. The span at Leu402 to Ser411 shows a compositional bias: low complexity. The interval Leu402–Ala437 is disordered.

As to expression, isoform 1 is expressed mainly in adult thymus. Isoform 2 is detected in adult skin. Isoform 3 is expressed in adult brain and embryo. Prominent expression sites include the olfactory placode, the basal layer of the olfactory epithelium, the neuroepithelium of the developing retina, the germinal zone of the differentiated eye, regions of motoneuron development in the neural tube and periventricular regions of the brain.

It is found in the nucleus. Transcription factor essential for neural and some non-neural tissues development. Binds to an 11-bp consensus sequence containing the invariant tetranucleotide 5'-ACGC-3'. During development of the central nervous system, required to specify the amacrine and horizontal cell fates from multipotent retinal progenitors while suppressing the alternative photoreceptor cell fates. Drives commitment of p2 progenitors to the V2b interneuron fates during spinal cord neurogenesis. In development of non-neural tissues, plays an essential role in the specification of the atrioventricular canal. In Danio rerio (Zebrafish), this protein is Forkhead box protein N4 (foxn4).